The following is a 337-amino-acid chain: ATP-dependent 6-phosphofructokinase (337 aa).

Residue Gly11 coordinates ATP. 21–25 contacts ADP; that stretch reads RAVVR. ATP contacts are provided by residues 72–73 and 102–105; these read RY and GDGS. Position 103 (Asp103) interacts with Mg(2+). Substrate is bound at residue 125–127; it reads TID. Asp127 functions as the Proton acceptor in the catalytic mechanism. An ADP-binding site is contributed by Arg154. Residues Arg162 and 169 to 171 each bind substrate; that span reads MGR. ADP is bound by residues 185–187, Lys212, and 214–216; these read GAD and KNH. Residues Glu223, Arg245, and 251 to 254 each bind substrate; that span reads HILR.

It belongs to the phosphofructokinase type A (PFKA) family. ATP-dependent PFK group I subfamily. Prokaryotic clade 'B1' sub-subfamily. As to quaternary structure, homotetramer. Requires Mg(2+) as cofactor.

Its subcellular location is the cytoplasm. The enzyme catalyses beta-D-fructose 6-phosphate + ATP = beta-D-fructose 1,6-bisphosphate + ADP + H(+). The protein operates within carbohydrate degradation; glycolysis; D-glyceraldehyde 3-phosphate and glycerone phosphate from D-glucose: step 3/4. Allosterically activated by ADP and other diphosphonucleosides, and allosterically inhibited by phosphoenolpyruvate. Its function is as follows. Catalyzes the phosphorylation of D-fructose 6-phosphate to fructose 1,6-bisphosphate by ATP, the first committing step of glycolysis. This is ATP-dependent 6-phosphofructokinase from Streptococcus pyogenes serotype M3 (strain SSI-1).